The chain runs to 795 residues: MTYVKKYHPTTKYYGIIHGEKYELQDVLFYSFNYSNREEVCPISGTAHKSNGFYVIETSKGYFMKCHSDKCKNKKAKYLGPADATDMFVKCANQIDQQYLIMKGGIADAPKEPVKDIIINWLSNDKIKTLAVRSPMGTGKTTMIKKILDHYDNIKKILWISHRQTLSKQIYGSFKNHGFVNYMDQKGNLFEHDRLIIQIDSLKRIFKYDKDYNTVFKQYDLVIIDEIEGNMNHFMSPYLRKDSDFSVRQTFQKMLNCIDTAKKLLVLDADLGMRSKLFIDNFGKSIVVNNNYKPIQKIFEITNDLSSFQEILLADIKDGKNVCVVSMSASYLDKLEPKFAGLKYVIHTSKSDDKLKNELENVNYFWKKFQICCFSPTIECGVDFNEKHFDKIYCYLKNGSKTCSQRSLLQMVGRIRQLGNNKILCYYSGPTNIDADIYTYDDILGYFRHYEKINGRKVLENVEYKKFIANGEVTLKRVSANISLFDHIHIYNEVEESNKNHSMFITVLFKLIQRAGHSMIFNTVEEPEEVEPDNNVISHAEILSMINETKYKISDLMKKQSKNQLSRTEKLVLEKYFFMKNFGVKDSSNKDEFVKFHKKYANKEITFKHFKRFFGYDNPNNSIDELKHLDIFVSNKKPPNNNNNNFLDEHNDSKDAVRDKIIVNFLNLILDVKKNGYGPDDLGYTLTQDEHNTAVLTVAEQSMYFANEDKYRPLFNKNKGKFKEINEYNFKHYFKTVKAILQSYGIDYYRGNRKRVNSRREFEYSLSVDKQIRDIVDFKFGLSDTVDEFPNLFHK.

The region spanning 121-289 is the Helicase ATP-binding domain; it reads WLSNDKIKTL…DNFGKSIVVN (169 aa). An ATP-binding site is contributed by 134–141; it reads SPMGTGKT.

The protein belongs to the mimivirus R1 family.

Probably involved in DNA replication. May bind the genome origin of replication (ori). This Acanthamoeba polyphaga (Amoeba) protein is Putative replication origin-binding protein.